The chain runs to 74 residues: ATP synthase subunit c (74 aa).

The next 2 membrane-spanning stretches (helical) occupy residues 5 to 25 (LAHI…IGVG) and 49 to 69 (LFIG…VALL).

The protein belongs to the ATPase C chain family. F-type ATPases have 2 components, F(1) - the catalytic core - and F(0) - the membrane proton channel. F(1) has five subunits: alpha(3), beta(3), gamma(1), delta(1), epsilon(1). F(0) has four main subunits: a(1), b(1), b'(1) and c(10-14). The alpha and beta chains form an alternating ring which encloses part of the gamma chain. F(1) is attached to F(0) by a central stalk formed by the gamma and epsilon chains, while a peripheral stalk is formed by the delta, b and b' chains.

It is found in the cell inner membrane. In terms of biological role, f(1)F(0) ATP synthase produces ATP from ADP in the presence of a proton or sodium gradient. F-type ATPases consist of two structural domains, F(1) containing the extramembraneous catalytic core and F(0) containing the membrane proton channel, linked together by a central stalk and a peripheral stalk. During catalysis, ATP synthesis in the catalytic domain of F(1) is coupled via a rotary mechanism of the central stalk subunits to proton translocation. Functionally, key component of the F(0) channel; it plays a direct role in translocation across the membrane. A homomeric c-ring of between 10-14 subunits forms the central stalk rotor element with the F(1) delta and epsilon subunits. This is ATP synthase subunit c from Roseobacter denitrificans (strain ATCC 33942 / OCh 114) (Erythrobacter sp. (strain OCh 114)).